A 139-amino-acid chain; its full sequence is Non-structural protein 1 (139 aa).

A DLNP; interaction with MAP1B motif is present at residues 136-139; that stretch reads DLNP.

This sequence belongs to the pneumovirus non-structural protein 1 family. Monomer. Homomultimer. Heteromultimer with NS2. Interacts with the matrix protein M. Interacts with host ELOC and CUL2; this interaction allows NS1 to form an active E3 ligase with ELOC and CUL2. Interacts with host IRF3; this interaction leads to the disrupted association of IRF3 with CREBBP and thus reduced binding of IRF3 to the IFN-beta promoter. Interacts with host MAVS; this interaction prevents MAVS binding to RIGI and inhibits signaling pathway leading to interferon production. Interacts with host MAP1B/microtubule-associated protein 1B. Interacts with host TRIM25 (via SPRY domain); this interaction suppresses RIGI ubiquitination and results in decreased interaction between RIGI and MAVS.

It localises to the host cytoplasm. It is found in the host mitochondrion. Its subcellular location is the host nucleus. In terms of biological role, plays a major role in antagonizing the type I IFN-mediated antiviral response by degrading or inhibiting multiple cellular factors required for either IFN induction or response pathways. Acts cooperatively with NS2 to repress activation and nuclear translocation of host IFN-regulatory factor IRF3. Also disrupts the association of IRF3 with CREBBP. Interacts with host mitochondrial-associated membrane (MAM) MAVS and prevents the interaction with RIGI. Interacts with TRIM25 to suppress TRIM25-mediated RIGI ubiquitination and thereby RIGI-MAVS interaction. Together with NS2, participates in the proteasomal degradation of host STAT2, IRF3, IRF7, TBK1 and RIGI through a NS-degradasome involving CUL2 and Elongin-C. The degradasome requires an intact mitochondrial MAVS. Decreases the levels of host TRAF3 and IKBKE/IKK-epsilon. As functions other than disruptions of the type I IFN-mediated antiviral signaling pathways, induces host SOCS1 and SOCS3 expression. Suppresses premature apoptosis by an NF-kappa-B-dependent, interferon-independent mechanism and thus facilitates virus growth. Additionally, NS1 may serve some inhibitory role in viral transcription and RNA replication. Suppresses proliferation and activation of host CD103+ CD8+ cytotoxic T-lymphocytes and Th17 helper T-lymphocytes. In Homo sapiens (Human), this protein is Non-structural protein 1 (1C).